Consider the following 400-residue polypeptide: Phosphoglycerate kinase (400 aa).

Substrate is bound by residues 22-24 (DFN), arginine 38, 61-64 (HLGR), arginine 119, and arginine 152. ATP-binding positions include lysine 205, glycine 296, glutamate 327, and 353–356 (GGDT).

The protein belongs to the phosphoglycerate kinase family. Monomer.

The protein resides in the cytoplasm. It carries out the reaction (2R)-3-phosphoglycerate + ATP = (2R)-3-phospho-glyceroyl phosphate + ADP. It functions in the pathway carbohydrate degradation; glycolysis; pyruvate from D-glyceraldehyde 3-phosphate: step 2/5. This is Phosphoglycerate kinase from Campylobacter jejuni subsp. jejuni serotype O:2 (strain ATCC 700819 / NCTC 11168).